A 319-amino-acid polypeptide reads, in one-letter code: Cytochrome c biogenesis protein CcsA (319 aa).

A run of 5 helical transmembrane segments spans residues A14–W34, A46–F66, S74–G94, L97–L117, and V142–V162. Residues S175–V201 form a disordered region. The span at E191–V201 shows a compositional bias: polar residues. 3 consecutive transmembrane segments (helical) span residues M227 to N247, W254 to L274, and A288 to L308.

It belongs to the CcmF/CycK/Ccl1/NrfE/CcsA family. May interact with ccs1.

It localises to the cellular thylakoid membrane. Required during biogenesis of c-type cytochromes (cytochrome c6 and cytochrome f) at the step of heme attachment. In Thermosynechococcus vestitus (strain NIES-2133 / IAM M-273 / BP-1), this protein is Cytochrome c biogenesis protein CcsA.